Consider the following 166-residue polypeptide: Urease accessory protein UreE (166 aa).

Residues 135-156 (EQGAYGGGHHHSHHGDEEFNYG) are disordered.

It belongs to the UreE family.

It is found in the cytoplasm. Functionally, involved in urease metallocenter assembly. Binds nickel. Probably functions as a nickel donor during metallocenter assembly. The sequence is that of Urease accessory protein UreE from Ectopseudomonas mendocina (strain ymp) (Pseudomonas mendocina).